Here is a 356-residue protein sequence, read N- to C-terminus: MRVTDFSFELPESLIAHYPMPERSSCRLLSLDGPTGALTHGTFTDLLDKLNPGDLLVFNNTRVIPARLFGRKASGGKIEVLVERMLDDKRILAHIRASKAPKPGAELLLGDDESINATMTARHGALFEVEFNDERSVLDILNSIGHMPLPPYIDRPDEDADRELYQTVYSEKPGAVAAPTAGLHFDEPLLEKLRAKGVEMAFVTLHVGAGTFQPVRVDTIEDHIMHSEYAEVPQDVVDAVLAAKARGNRVIAVGTTSVRSLESAAQAAKNDLIEPFFDDTQIFIYPGFQYKVVDALVTNFHLPESTLIMLVSAFAGYQHTMNAYKAAVEEKYRFFSYGDAMFITYNPQAINERVGE.

This sequence belongs to the QueA family. Monomer.

The protein localises to the cytoplasm. The catalysed reaction is 7-aminomethyl-7-carbaguanosine(34) in tRNA + S-adenosyl-L-methionine = epoxyqueuosine(34) in tRNA + adenine + L-methionine + 2 H(+). It participates in tRNA modification; tRNA-queuosine biosynthesis. Its function is as follows. Transfers and isomerizes the ribose moiety from AdoMet to the 7-aminomethyl group of 7-deazaguanine (preQ1-tRNA) to give epoxyqueuosine (oQ-tRNA). The polypeptide is S-adenosylmethionine:tRNA ribosyltransferase-isomerase (Shigella dysenteriae serotype 1 (strain Sd197)).